Here is a 559-residue protein sequence, read N- to C-terminus: 2,3-bisphosphoglycerate-independent phosphoglycerate mutase (559 aa).

Residues aspartate 28 and serine 81 each contribute to the Mn(2+) site. Residue serine 81 is the Phosphoserine intermediate of the active site. Residues histidine 140, 170–171 (RD), arginine 206, arginine 213, 286–289 (RADR), and lysine 361 each bind substrate. Aspartate 430, histidine 434, aspartate 471, histidine 472, and histidine 501 together coordinate Mn(2+).

Belongs to the BPG-independent phosphoglycerate mutase family. In terms of assembly, monomer. Mn(2+) is required as a cofactor. Found ubiquitously in germinating seed.

The protein localises to the cytoplasm. It carries out the reaction (2R)-2-phosphoglycerate = (2R)-3-phosphoglycerate. It functions in the pathway carbohydrate degradation; glycolysis; pyruvate from D-glyceraldehyde 3-phosphate: step 3/5. Functionally, catalyzes the interconversion of 2-phosphoglycerate and 3-phosphoglycerate. The chain is 2,3-bisphosphoglycerate-independent phosphoglycerate mutase from Nicotiana tabacum (Common tobacco).